We begin with the raw amino-acid sequence, 576 residues long: Protein alan shepard (576 aa).

The segment covering 1–12 (MHPRYSPAPPPQ) has biased composition (pro residues). The tract at residues 1–66 (MHPRYSPAPP…GSSSSAAAAP (66 aa)) is disordered. A Phosphotyrosine modification is found at Y5. Residues 13-24 (QQQQMGGPPHQQ) are compositionally biased toward low complexity. A compositionally biased stretch (gly residues) spans 25–35 (QGGGGGGGGNM). Over residues 37-54 (GPSNAQQLPPQIPRSQNY) the composition is skewed to polar residues. Residues 55–66 (SNGSSSSAAAAP) are compositionally biased toward low complexity. Phosphotyrosine occurs at positions 125 and 142. Residues 164 to 225 (PATTTYGQRV…TVQNQNQQGG (62 aa)) are disordered. The segment covering 178-225 (SPSNTNSSSSSNTGSQSGTLSTSLSNTTNTNTNMGPNGTVQNQNQQGG) has biased composition (low complexity). RRM domains follow at residues 231–302 (TNLY…MAKQ) and 308–387 (TNLY…FADG). The tract at residues 538–576 (YAPPPTIIPTMPMTDSEQASTAASPDEAYTQYPHQAAPK) is disordered.

Has a role in the perception of gravity. The sequence is that of Protein alan shepard from Drosophila simulans (Fruit fly).